We begin with the raw amino-acid sequence, 104 residues long: Toxin-like protein 14 (104 aa).

An N-terminal signal peptide occupies residues 1–25 (MNTYNARLYIFSLALALVILKGTKC).

Contains 4 disulfide bonds. In terms of tissue distribution, expressed by the venom gland.

Its subcellular location is the secreted. The chain is Toxin-like protein 14 from Urodacus yaschenkoi (Inland robust scorpion).